Consider the following 420-residue polypeptide: DNA repair protein RadA (420 aa).

Position 62–69 (62–69) interacts with ATP; that stretch reads GDPGIGKS. The RadA KNRFG motif signature appears at 218-222; the sequence is KNRFG. A lon-protease-like region spans residues 317-420; it reads DAYLKSAGGV…IQEVLKKVFA (104 aa).

It belongs to the RecA family. RadA subfamily.

Its function is as follows. Plays a role in repairing double-strand DNA breaks, probably involving stabilizing or processing branched DNA or blocked replication forks. Required for efficient transformation with chromosomal (linear) DNA, but not for replicative plasmid DNA. Its increased sensitivity to a DNA damaging agent suggests it may be required for DNA repair. The polypeptide is DNA repair protein RadA (Streptococcus pneumoniae (strain ATCC BAA-255 / R6)).